Here is a 396-residue protein sequence, read N- to C-terminus: N-acyl-phosphatidylethanolamine-hydrolyzing phospholipase D (396 aa).

Met-1 is subject to N-acetylmethionine. 2 stretches are compositionally biased toward polar residues: residues 1–12 (MDENENSQSPAP) and 26–37 (NSVQNSGGSESS). The segment at 1–41 (MDENENSQSPAPSHQYPKETLRKRQNSVQNSGGSESSRLSR) is disordered. Zn(2+) contacts are provided by His-185 and His-187. Tyr-188 lines the an N-acyl-1,2-diacyl-sn-glycero-3-phosphoethanolamine pocket. Residues Asp-189, His-190, and His-253 each contribute to the Zn(2+) site. Lys-256 contacts deoxycholate. Asp-284 is a Zn(2+) binding site. Residue His-321 participates in an N-acyl-1,2-diacyl-sn-glycero-3-phosphoethanolamine binding. His-343 lines the Zn(2+) pocket. Ala-348 lines the deoxycholate pocket.

Belongs to the NAPE-PLD family. As to quaternary structure, homodimer. Bile acids promote the assembly of inactive monomers into an active dimer and enable catalysis. Zn(2+) is required as a cofactor. Widely expressed. Highest expression in brain, kidney and testis (at protein level). Expressed in adipose tissue (at protein level).

It localises to the golgi apparatus membrane. The protein resides in the early endosome membrane. The protein localises to the nucleus envelope. Its subcellular location is the nucleus. It is found in the nucleoplasm. It catalyses the reaction an N-acyl-1,2-diacyl-sn-glycero-3-phosphoethanolamine + H2O = an N-acylethanolamine + a 1,2-diacyl-sn-glycero-3-phosphate + H(+). It carries out the reaction N-butanoyl-1-hexadecanoyl-2-(9Z,12Z-octadecadienoyl)-sn-glycero-3-phosphoethanolamine + H2O = N-butanoyl ethanolamine + 1-hexadecanoyl-2-(9Z,12Z-octadecadienoyl)-sn-glycero-3-phosphate + H(+). The enzyme catalyses N-hexanoyl-1-hexadecanoyl-2-(9Z,12Z-octadecadienoyl)-sn-glycero-3-phosphoethanolamine + H2O = N-hexanoyl ethanolamine + 1-hexadecanoyl-2-(9Z,12Z-octadecadienoyl)-sn-glycero-3-phosphate + H(+). The catalysed reaction is N-octanoyl-1-hexadecanoyl-2-(9Z,12Z-octadecadienoyl)-sn-glycero-3-phosphoethanolamine + H2O = N-octanoyl ethanolamine + 1-hexadecanoyl-2-(9Z,12Z-octadecadienoyl)-sn-glycero-3-phosphate + H(+). It catalyses the reaction N-decanoyl-1-hexadecanoyl-2-(9Z,12Z-octadecadienoyl)-sn-glycero-3-phosphoethanolamine + H2O = N-decanoyl ethanolamine + 1-hexadecanoyl-2-(9Z,12Z-octadecadienoyl)-sn-glycero-3-phosphate + H(+). It carries out the reaction N-dodecanoyl-1,2-di-(9Z-octadecenoyl)-sn-glycero-3-phosphoethanolamine + H2O = N-dodecanoylethanolamine + 1,2-di-(9Z-octadecenoyl)-sn-glycero-3-phosphate + H(+). The enzyme catalyses N-tetradecanoyl-1,2-di-(9Z-octadecenoyl)-sn-glycero-3-phosphoethanolamine + H2O = N-tetradecanoylethanolamine + 1,2-di-(9Z-octadecenoyl)-sn-glycero-3-phosphate + H(+). The catalysed reaction is N-hexadecanoyl-1,2-di-(9Z-octadecenoyl)-sn-glycero-3-phosphoethanolamine + H2O = N-hexadecanoylethanolamine + 1,2-di-(9Z-octadecenoyl)-sn-glycero-3-phosphate + H(+). It catalyses the reaction N,1-dihexadecanoyl-2-(9Z,12Z-octadecadienoyl)-sn-glycero-3-phosphoethanolamine + H2O = 1-hexadecanoyl-2-(9Z,12Z-octadecadienoyl)-sn-glycero-3-phosphate + N-hexadecanoylethanolamine + H(+). It carries out the reaction N-octadecanoyl-1,2-di-(9Z-octadecenoyl)-sn-glycero-3-phosphoethanolamine + H2O = N-octadecanoyl ethanolamine + 1,2-di-(9Z-octadecenoyl)-sn-glycero-3-phosphate + H(+). The enzyme catalyses N,1,2-tri-(9Z-octadecenoyl)-sn-glycero-3-phosphoethanolamine + H2O = N-(9Z-octadecenoyl) ethanolamine + 1,2-di-(9Z-octadecenoyl)-sn-glycero-3-phosphate + H(+). The catalysed reaction is N-(5Z,8Z,11Z,14Z-eicosatetraenoyl)-1,2-diacyl-sn-glycero-3-phosphoethanolamine + H2O = N-(5Z,8Z,11Z,14Z-eicosatetraenoyl)-ethanolamine + a 1,2-diacyl-sn-glycero-3-phosphate + H(+). It catalyses the reaction N-(5Z,8Z,11Z,14Z-eicosatetraenoyl)-1,2-di-(9Z-octadecenoyl)-sn-glycero-3-phosphoethanolamine + H2O = N-(5Z,8Z,11Z,14Z-eicosatetraenoyl)-ethanolamine + 1,2-di-(9Z-octadecenoyl)-sn-glycero-3-phosphate + H(+). It carries out the reaction 1-O-(1Z-octadecenoyl)-2-(9Z-octadecenoyl)-sn-glycero-3-phospho-N-hexadecanoyl-ethanolamine + H2O = 1-O-(1Z-octadecenoyl)-2-(9Z-octadecenoyl)-sn-glycero-3-phosphate + N-hexadecanoylethanolamine + H(+). The enzyme catalyses N,1-diacyl-sn-glycero-3-phosphoethanolamine + H2O = an N-acylethanolamine + a 1-acyl-sn-glycero-3-phosphate + H(+). The catalysed reaction is N,1-dihexadecanoyl-sn-glycero-3-phosphoethanolamine + H2O = N-hexadecanoylethanolamine + 1-hexadecanoyl-sn-glycero-3-phosphate + H(+). It catalyses the reaction N-(5Z,8Z,11Z,14Z-eicosatetraenoyl)-1-(9Z-octadecenoyl)-sn-glycero-3-phosphoethanolamine + H2O = N-(5Z,8Z,11Z,14Z-eicosatetraenoyl)-ethanolamine + 1-(9Z-octadecenoyl)-sn-glycero-3-phosphate + H(+). With respect to regulation, activated by divalent cations. Activated by bile acids. Activated by membrane phospholipids such as phosphatidylethanolamines. Inhibited by cardiolipins. Its function is as follows. D-type phospholipase that hydrolyzes N-acyl-phosphatidylethanolamines (NAPEs) to produce bioactive N-acylethanolamines/fatty acid ethanolamides (NAEs/FAEs) and phosphatidic acid. Cleaves the terminal phosphodiester bond of diacyl- and alkenylacyl-NAPEs, primarily playing a role in the generation of long-chain saturated and monounsaturated NAEs in the brain. May control NAPE homeostasis in dopaminergic neuron membranes and regulate neuron survival, partly through RAC1 activation. As a regulator of lipid metabolism in the adipose tissue, mediates the crosstalk between adipocytes, gut microbiota and immune cells to control body temperature and weight. In particular, regulates energy homeostasis by promoting cold-induced brown or beige adipocyte differentiation program to generate heat from fatty acids and glucose. Has limited D-type phospholipase activity toward N-acyl lyso-NAPEs. In Rattus norvegicus (Rat), this protein is N-acyl-phosphatidylethanolamine-hydrolyzing phospholipase D (Napepld).